A 429-amino-acid polypeptide reads, in one-letter code: MLVVKKTPKIKGILSAPPSKSYTHRAVICASLANGISNLKNPLNGADCLSSAHACEMFGAEIELSNETWVVRGSELKTPDNIVDIGNSGTTLRILTGISSQISNGYTVLTGDDSIRKRPMQPLLDALNQLGLTCFSTKNNGTAPIVVKSGKISNNVVEIRGDVSSQFITSIMMTLPFSENDSEIVLTTPLKSEPYLNITIDVLDKFGVKIEKNEEKNKSGYKIKGNQKYLPCDYTIEGDYSSASYLVAAGVLLNSDIVIKNVFKDSKQGDREIIEIVKKMGANVEINEDHVKITGPYKLKGIEIDVTDIPDLVPTIAVLGCFADGKTVVYNGEHVRLKECDRLAACTTELSKMGAEIEEKKDGLIITGVHKLNGAKLKTYHDHRLVMAFTIAGMLADGETIIEGEDSVKISFPDFVDNMKSIGSNIEVI.

3-phosphoshikimate contacts are provided by Lys-20, Ser-21, and Arg-25. Lys-20 serves as a coordination point for phosphoenolpyruvate. Phosphoenolpyruvate contacts are provided by Gly-89 and Arg-118. Residues Ser-164, Ser-165, Gln-166, Ser-192, Asp-311, and Lys-338 each coordinate 3-phosphoshikimate. Gln-166 is a binding site for phosphoenolpyruvate. Asp-311 acts as the Proton acceptor in catalysis. Residues Arg-342 and Arg-384 each contribute to the phosphoenolpyruvate site.

It belongs to the EPSP synthase family. As to quaternary structure, monomer.

The protein resides in the cytoplasm. It catalyses the reaction 3-phosphoshikimate + phosphoenolpyruvate = 5-O-(1-carboxyvinyl)-3-phosphoshikimate + phosphate. The protein operates within metabolic intermediate biosynthesis; chorismate biosynthesis. Its function is as follows. Catalyzes the transfer of the enolpyruvyl moiety of phosphoenolpyruvate (PEP) to the 5-hydroxyl of shikimate-3-phosphate (S3P) to produce enolpyruvyl shikimate-3-phosphate and inorganic phosphate. This chain is 3-phosphoshikimate 1-carboxyvinyltransferase, found in Methanococcus maripaludis (strain C5 / ATCC BAA-1333).